We begin with the raw amino-acid sequence, 242 residues long: Small ribosomal subunit protein uS2 (242 aa).

It belongs to the universal ribosomal protein uS2 family.

The protein is Small ribosomal subunit protein uS2 of Colwellia psychrerythraea (strain 34H / ATCC BAA-681) (Vibrio psychroerythus).